We begin with the raw amino-acid sequence, 436 residues long: 3-phosphoshikimate 1-carboxyvinyltransferase (436 aa).

Residues Lys22, Ser23, and Arg27 each contribute to the 3-phosphoshikimate site. Lys22 provides a ligand contact to phosphoenolpyruvate. Residues Gly95 and Arg123 each coordinate phosphoenolpyruvate. The 3-phosphoshikimate site is built by Ser170, Ser171, Gln172, Ser201, Asp322, and Lys349. Gln172 provides a ligand contact to phosphoenolpyruvate. Asp322 serves as the catalytic Proton acceptor. Arg353, Arg397, and Lys422 together coordinate phosphoenolpyruvate.

It belongs to the EPSP synthase family. As to quaternary structure, monomer.

It is found in the cytoplasm. It carries out the reaction 3-phosphoshikimate + phosphoenolpyruvate = 5-O-(1-carboxyvinyl)-3-phosphoshikimate + phosphate. The protein operates within metabolic intermediate biosynthesis; chorismate biosynthesis; chorismate from D-erythrose 4-phosphate and phosphoenolpyruvate: step 6/7. Catalyzes the transfer of the enolpyruvyl moiety of phosphoenolpyruvate (PEP) to the 5-hydroxyl of shikimate-3-phosphate (S3P) to produce enolpyruvyl shikimate-3-phosphate and inorganic phosphate. The chain is 3-phosphoshikimate 1-carboxyvinyltransferase from Ralstonia nicotianae (strain ATCC BAA-1114 / GMI1000) (Ralstonia solanacearum).